Reading from the N-terminus, the 167-residue chain is Zinc finger CCCH domain-containing protein 3 (167 aa).

The C3H1-type zinc finger occupies 63-91 (AAAIGVCQHFVRTGTCKFGDSCRYFHPKP). The span at 89 to 101 (PKPPPANPGPAPS) shows a compositional bias: pro residues. Residues 89–167 (PKPPPANPGP…YPPFPFVDWG (79 aa)) form a disordered region. Residues 108–120 (MAQQSNIQGSQPN) show a composition bias toward polar residues. Over residues 149 to 167 (SLRPPPEGGYPPFPFVDWG) the composition is skewed to pro residues.

The protein is Zinc finger CCCH domain-containing protein 3 of Oryza sativa subsp. japonica (Rice).